The following is a 491-amino-acid chain: (S)-canadine synthase (491 aa).

Residues 6–26 (LLVCATVAIVFATTTIIRILF) traverse the membrane as a helical segment. Cys-434 provides a ligand contact to heme.

This sequence belongs to the cytochrome P450 family. Heme serves as cofactor. Expressed at low levels in roots.

The protein localises to the endoplasmic reticulum membrane. Its subcellular location is the microsome membrane. The enzyme catalyses (S)-tetrahydrocolumbamine + reduced [NADPH--hemoprotein reductase] + O2 = (S)-canadine + oxidized [NADPH--hemoprotein reductase] + 2 H2O + H(+). Functionally, involved in the last but one step of the biosynthesis of berberine, an antimicrobial benzylisoquinoline alkaloid. Converts (S)-tetrahydrocolumbamine (THC) to (S)-tetrahydroberberine (THB) also called (S)-canadine. This is (S)-canadine synthase (CYP719A1) from Coptis japonica (Japanese goldthread).